The chain runs to 888 residues: Lon protease homolog 2, peroxisomal (888 aa).

Residues 11–255 (LAILPFRNKV…KATELVDRHL (245 aa)) form the Lon N-terminal domain. Position 408-415 (408-415 (GPPGVGKT)) interacts with ATP. The Lon proteolytic domain occupies 692–877 (VASAGVSVGL…EDVLENAFEG (186 aa)). Active-site residues include serine 783 and lysine 826. A Microbody targeting signal motif is present at residues 886–888 (SKL).

The protein belongs to the peptidase S16 family.

The protein localises to the peroxisome matrix. The catalysed reaction is Hydrolysis of proteins in presence of ATP.. Its function is as follows. ATP-dependent serine protease that mediates the selective degradation of misfolded and unassembled polypeptides in the peroxisomal matrix. Necessary for type 2 peroxisome targeting signal (PTS2)-containing protein processing and facilitates peroxisome matrix protein import. This chain is Lon protease homolog 2, peroxisomal (LON2), found in Arabidopsis thaliana (Mouse-ear cress).